Reading from the N-terminus, the 878-residue chain is MKTLTSAQVRQMFLDFFKEKGHAVEPSASLVPHDDPTLLWINSGVATLKKYFDGRVVPDNPRICNAQKSIRTNDIENVGKTARHHTFFEMLGNFSIGDYFKEEAIEWAWEFLTSDEWIGFDPNLLSVTVHPEDEEAYVLWRDKIGVPEERIIRLEGNFWDIGEGPSGPNTEIFYDRGESYGHDMNDPELYPGGENERYLEVWNLVFSEFNHNPDGSYTPLPKKNIDTGMGLERMVSVIQNVPTNFDTDLFMPIIRAVETISGESYGETKEKDTAFKVIADHIRTVAFAVSDGALPSNEGRGYVLRRLLRRAVRYAKTIHIHRPFMFDLVPVVAEIMKDFYPDVQAKEEFIAKVIKNEEERFHETLNEGLAILSEVIKKERDKGSSQISGEDVFKLYDTYGFPVELTEEYAEDEHMTVDREGFQAEMEKQRERARNARQDVGSMQVQGGALGDIKVESTFVGYENLTAVAHMIELLQNGEIVSEAHEGDTVQILLDETPFYAESGGQVADKGTLKSAEVIIDIKDVKKAPNGQHVHEGVVVSGTAKKGLVVTAEVESALRKGIVKNHTATHLLHQALKDVLGSHVNQAGSLVNENRLRFDFSHFGQVTKEELSQIEKIVNEKIWEGISVAIDLKPIAEAKEMGAMALFGEKYGDIVRVVQVGDYSIELCGGCHVQNTAEIGLFKIASESGIGAGTRRIEAVTGKGAYEELNDQLGILEQAASELKSNTKDVPKRIASLQADLKEVQRENESLLAKLSQAEAGSILEKVTEIGGVKVLTEKVNAKDMNHLRTMVDDLKAKLGSAVIVLGAVQNGKVNISAGVTKDVIEKGLHAGKLVKQAAEICGGGGGGRPDMAQAGGKQPEKLEEALTSVEESVKSVL.

Residues His566, His570, Cys668, and His672 each coordinate Zn(2+). The interval 846-866 (GGGRPDMAQAGGKQPEKLEEA) is disordered.

Belongs to the class-II aminoacyl-tRNA synthetase family. Requires Zn(2+) as cofactor.

Its subcellular location is the cytoplasm. The catalysed reaction is tRNA(Ala) + L-alanine + ATP = L-alanyl-tRNA(Ala) + AMP + diphosphate. Functionally, catalyzes the attachment of alanine to tRNA(Ala) in a two-step reaction: alanine is first activated by ATP to form Ala-AMP and then transferred to the acceptor end of tRNA(Ala). Also edits incorrectly charged Ser-tRNA(Ala) and Gly-tRNA(Ala) via its editing domain. In Bacillus pumilus (strain SAFR-032), this protein is Alanine--tRNA ligase.